A 269-amino-acid chain; its full sequence is MAPLRILISNDDGVFADGIRALAGAAAAAGHQVTVVCPDRERSATGHGLTLQTPIRAEKADSLFDAGISAWACSGTPADCMKLALFELMDEAPDLVLSGINHGPNLGTDVFCSGTVAAAMEGTLEGLPSMAISSACFQWRDFQGAAALAVEVATAALRDQWPENLLLNLNIPPCRPEVMGPLRWTRLSIRRYDEQFSPRKDPRGRTYYWLAGEVVEDLESGGDGPRDWPTDVAQIEANSPSLTPIQPELFWRGPLGGLPRLELNGQRVR.

A divalent metal cation is bound by residues aspartate 11, aspartate 12, serine 43, and asparagine 101.

It belongs to the SurE nucleotidase family. A divalent metal cation is required as a cofactor.

Its subcellular location is the cytoplasm. The catalysed reaction is a ribonucleoside 5'-phosphate + H2O = a ribonucleoside + phosphate. Functionally, nucleotidase that shows phosphatase activity on nucleoside 5'-monophosphates. In Synechococcus sp. (strain WH7803), this protein is 5'-nucleotidase SurE.